A 244-amino-acid chain; its full sequence is MNFEGKIALVTGASRGIGRAIAETLAARGAKVIGTATSENGAQAISDYLGANGKGLMLNVTDPASIESVLEKIRAEFGEVDILVNNAGITRDNLLMRMKDEEWNDIIETNLSSVFRLSKAVMRAMMKKRHGRIITIGSVVGTMGNGGQANYAAAKAGLIGFSKSLAREVASRGITVNVVAPGFIETDMTRALSDDQRAGILAQVPAGRLGGAQEIANAVAFLASDEAAYITGETLHVNGGMYMV.

NADP(+) contacts are provided by residues 12 to 15 (GASR) and Thr37. Ca(2+) contacts are provided by Gly50 and Gly53. Residues 59–60 (NV) and Asn86 each bind NADP(+). Residue Ser138 coordinates substrate. Ca(2+) is bound at residue Asn145. Tyr151 (proton acceptor) is an active-site residue. Residues 151–155 (YAAAK) and Ile184 contribute to the NADP(+) site. Glu233 and Thr234 together coordinate Ca(2+).

The protein belongs to the short-chain dehydrogenases/reductases (SDR) family. Homotetramer.

The catalysed reaction is a (3R)-hydroxyacyl-[ACP] + NADP(+) = a 3-oxoacyl-[ACP] + NADPH + H(+). It carries out the reaction 3-oxobutanoyl-[ACP] + NADPH + H(+) = (3R)-hydroxybutanoyl-[ACP] + NADP(+). It catalyses the reaction 3-oxopentanoyl-[ACP] + NADPH + H(+) = (3R)-hydroxypentanoyl-[ACP] + NADP(+). The enzyme catalyses 3-oxohexanoyl-[ACP] + NADPH + H(+) = (3R)-hydroxyhexanoyl-[ACP] + NADP(+). The catalysed reaction is 3-oxoheptanoyl-[ACP] + NADPH + H(+) = (3R)-hydroxyheptanoyl-[ACP] + NADP(+). It carries out the reaction 3-oxooctanoyl-[ACP] + NADPH + H(+) = (3R)-hydroxyoctanoyl-[ACP] + NADP(+). It catalyses the reaction 3-oxononanoyl-[ACP] + NADPH + H(+) = (3R)-hydroxynonanoyl-[ACP] + NADP(+). The enzyme catalyses 3-oxodecanoyl-[ACP] + NADPH + H(+) = (3R)-hydroxydecanoyl-[ACP] + NADP(+). The catalysed reaction is 3-oxohexadecanoyl-[ACP] + NADPH + H(+) = (3R)-hydroxyhexadecanoyl-[ACP] + NADP(+). It carries out the reaction 3-oxo-(9Z)-hexadecenoyl-[ACP] + NADPH + H(+) = (3R)-hydroxy-(9Z)-hexadecenoyl-[ACP] + NADP(+). It catalyses the reaction 4-methyl-3-oxopentanoyl-[ACP] + NADPH + H(+) = (3R)-hydroxy-4-methylpentanoyl-[ACP] + NADP(+). The enzyme catalyses 5-methyl-3-oxohexanoyl-[ACP] + NADPH + H(+) = (3R)-hydroxy-5-methylhexanoyl-[ACP] + NADP(+). The catalysed reaction is 4-methyl-3-oxohexanoyl-[ACP] + NADPH + H(+) = (3R)-hydroxy-4-methylhexanoyl-[ACP] + NADP(+). The protein operates within lipid metabolism; fatty acid biosynthesis. Its activity is regulated as follows. Inhibited by cinnamic acid derivatives. In terms of biological role, catalyzes the NADPH-dependent reduction of beta-ketoacyl-ACP substrates to beta-hydroxyacyl-ACP products, the first reductive step in the elongation cycle of fatty acid biosynthesis. The sequence is that of 3-oxoacyl-[acyl-carrier-protein] reductase FabG (fabG) from Escherichia coli (strain K12).